A 517-amino-acid polypeptide reads, in one-letter code: Zinc finger protein 215 (517 aa).

Positions 48 to 126 (RQKFRHFQYL…EDMVTLIEDV (79 aa)) constitute an SCAN box domain. Residues 164–237 (VTFKDVVVEF…EKEIPRKTIF (74 aa)) form the KRAB domain. 4 C2H2-type zinc fingers span residues 379–401 (YECY…QIIH), 407–429 (YKCS…QKLH), 462–484 (YECV…QMIH), and 490–512 (FKCK…QKLH).

This sequence belongs to the krueppel C2H2-type zinc-finger protein family.

It localises to the nucleus. Its function is as follows. May be involved in transcriptional regulation. This Pongo abelii (Sumatran orangutan) protein is Zinc finger protein 215 (ZNF215).